The sequence spans 415 residues: Phosphoribosylamine--glycine ligase (415 aa).

In terms of domain architecture, ATP-grasp spans 108-311 (KKIMEKYNIP…LMQHIIDLDE (204 aa)). 134-191 (IENCELPVVVKKDGLAAGKGVIIADTIEAARSAIEIMYGDEEEGTVVFETFLEGEEFS) is a binding site for ATP. Mg(2+) contacts are provided by glutamate 281 and asparagine 283.

This sequence belongs to the GARS family. Mg(2+) is required as a cofactor. It depends on Mn(2+) as a cofactor.

It catalyses the reaction 5-phospho-beta-D-ribosylamine + glycine + ATP = N(1)-(5-phospho-beta-D-ribosyl)glycinamide + ADP + phosphate + H(+). It participates in purine metabolism; IMP biosynthesis via de novo pathway; N(1)-(5-phospho-D-ribosyl)glycinamide from 5-phospho-alpha-D-ribose 1-diphosphate: step 2/2. This is Phosphoribosylamine--glycine ligase from Staphylococcus aureus (strain MW2).